Consider the following 214-residue polypeptide: Ribosomal RNA small subunit methyltransferase G (214 aa).

S-adenosyl-L-methionine contacts are provided by residues glycine 58, 109–110, and arginine 126; that span reads AE.

It belongs to the methyltransferase superfamily. RNA methyltransferase RsmG family.

The protein resides in the cytoplasm. Specifically methylates the N7 position of a guanine in 16S rRNA. In Ureaplasma parvum serovar 3 (strain ATCC 700970), this protein is Ribosomal RNA small subunit methyltransferase G.